A 256-amino-acid polypeptide reads, in one-letter code: Protein US2 homolog (256 aa).

3 disordered regions span residues 100–120 (TRRPPADGSKPGEPLRISPPP), 167–186 (STAAGAPGAPTGARLTRRRP), and 236–256 (VRRRRGGRGNGRERAPRCTIS). The segment covering 167-180 (STAAGAPGAPTGAR) has biased composition (low complexity). Over residues 245–256 (NGRERAPRCTIS) the composition is skewed to basic and acidic residues.

The protein belongs to the herpesviridae US2 family.

This chain is Protein US2 homolog (28K), found in Sus scrofa (Pig).